A 407-amino-acid chain; its full sequence is Arrestin domain-containing protein 2 (407 aa).

Belongs to the arrestin family. In terms of assembly, interacts with WWP1 (via WW domains).

The polypeptide is Arrestin domain-containing protein 2 (Arrdc2) (Mus musculus (Mouse)).